The chain runs to 487 residues: Steroid 21-hydroxylase (487 aa).

Arg-92 and Lys-117 together coordinate heme b. Residue Arg-228 participates in 17alpha-hydroxyprogesterone binding. Arg-228 provides a ligand contact to progesterone. The heme b site is built by His-357, Arg-418, and Cys-420.

The protein belongs to the cytochrome P450 family. Requires heme b as cofactor.

The protein resides in the endoplasmic reticulum membrane. It localises to the microsome membrane. It carries out the reaction progesterone + reduced [NADPH--hemoprotein reductase] + O2 = 21-hydroxyprogesterone + oxidized [NADPH--hemoprotein reductase] + H2O + H(+). The catalysed reaction is 17alpha-hydroxyprogesterone + reduced [NADPH--hemoprotein reductase] + O2 = 11-deoxycortisol + oxidized [NADPH--hemoprotein reductase] + H2O + H(+). A cytochrome P450 monooxygenase that plays a major role in adrenal steroidogenesis. Catalyzes the hydroxylation at C-21 of progesterone and 17alpha-hydroxyprogesterone to respectively form 11-deoxycorticosterone and 11-deoxycortisol, intermediate metabolites in the biosynthetic pathway of mineralocorticoids and glucocorticoids. Mechanistically, uses molecular oxygen inserting one oxygen atom into a substrate, and reducing the second into a water molecule, with two electrons provided by NADPH via cytochrome P450 reductase (CPR; NADPH-ferrihemoprotein reductase). This is Steroid 21-hydroxylase (Cyp21) from Mus musculus (Mouse).